The chain runs to 160 residues: MGKSRGYRSGTRYAFQRDFKKHGAIPLSTYLKVYKVGDIVDIKANGSIQKGMPHKYYHGKTGIVYNVTKSSVGVIINKVVGNRYIEKRVNLRVEHVKHSACRQEFLNRVKSNAAKKREAKANGETVYLKRQAAKPRGSRIISTEGNIPQTLAPVAYETFI.

It belongs to the eukaryotic ribosomal protein eL21 family. In terms of assembly, component of the large ribosomal subunit. Mature ribosomes consist of a small (40S) and a large (60S) subunit. The 40S subunit contains about 32 different proteins and 1 molecule of RNA (18S). The 60S subunit contains 45 different proteins and 3 molecules of RNA (25S, 5.8S and 5S).

The protein localises to the cytoplasm. Component of the ribosome, a large ribonucleoprotein complex responsible for the synthesis of proteins in the cell. The small ribosomal subunit (SSU) binds messenger RNAs (mRNAs) and translates the encoded message by selecting cognate aminoacyl-transfer RNA (tRNA) molecules. The large subunit (LSU) contains the ribosomal catalytic site termed the peptidyl transferase center (PTC), which catalyzes the formation of peptide bonds, thereby polymerizing the amino acids delivered by tRNAs into a polypeptide chain. The nascent polypeptides leave the ribosome through a tunnel in the LSU and interact with protein factors that function in enzymatic processing, targeting, and the membrane insertion of nascent chains at the exit of the ribosomal tunnel. This chain is Large ribosomal subunit protein eL21, found in Candida albicans (strain SC5314 / ATCC MYA-2876) (Yeast).